A 206-amino-acid chain; its full sequence is Glycerol-3-phosphate acyltransferase 1 (206 aa).

5 helical membrane passes run 14–34 (IALAAAIIGYLFGSIPFGLIL), 67–87 (ATLLLDALKASAAAWVVSYFL), 91–111 (AAIIAGFFAFIGHLFPVWIGF), 124–144 (LLGVAPIMVVLFAAVWLAVAF), and 148–168 (YSSLSALVAMLVIPVALWILG).

This sequence belongs to the PlsY family. In terms of assembly, probably interacts with PlsX.

The protein resides in the cell inner membrane. It carries out the reaction an acyl phosphate + sn-glycerol 3-phosphate = a 1-acyl-sn-glycero-3-phosphate + phosphate. It participates in lipid metabolism; phospholipid metabolism. Functionally, catalyzes the transfer of an acyl group from acyl-phosphate (acyl-PO(4)) to glycerol-3-phosphate (G3P) to form lysophosphatidic acid (LPA). This enzyme utilizes acyl-phosphate as fatty acyl donor, but not acyl-CoA or acyl-ACP. This Rhizobium johnstonii (strain DSM 114642 / LMG 32736 / 3841) (Rhizobium leguminosarum bv. viciae) protein is Glycerol-3-phosphate acyltransferase 1.